The primary structure comprises 339 residues: Nicotinate-nucleotide--dimethylbenzimidazole phosphoribosyltransferase (339 aa).

Glu306 acts as the Proton acceptor in catalysis.

This sequence belongs to the CobT family.

It carries out the reaction 5,6-dimethylbenzimidazole + nicotinate beta-D-ribonucleotide = alpha-ribazole 5'-phosphate + nicotinate + H(+). It participates in nucleoside biosynthesis; alpha-ribazole biosynthesis; alpha-ribazole from 5,6-dimethylbenzimidazole: step 1/2. Functionally, catalyzes the synthesis of alpha-ribazole-5'-phosphate from nicotinate mononucleotide (NAMN) and 5,6-dimethylbenzimidazole (DMB). The sequence is that of Nicotinate-nucleotide--dimethylbenzimidazole phosphoribosyltransferase from Brucella melitensis biotype 2 (strain ATCC 23457).